Here is a 206-residue protein sequence, read N- to C-terminus: Small ribosomal subunit protein uS5 (206 aa).

The interval Met1 to Asp42 is disordered. The S5 DRBM domain maps to Phe43–Val106.

It belongs to the universal ribosomal protein uS5 family. Part of the 30S ribosomal subunit. Contacts proteins S4 and S8.

Functionally, with S4 and S12 plays an important role in translational accuracy. In terms of biological role, located at the back of the 30S subunit body where it stabilizes the conformation of the head with respect to the body. This Mesoplasma florum (strain ATCC 33453 / NBRC 100688 / NCTC 11704 / L1) (Acholeplasma florum) protein is Small ribosomal subunit protein uS5.